We begin with the raw amino-acid sequence, 73 residues long: DNA gyrase inhibitor YacG (73 aa).

Positions 14, 17, 30, and 34 each coordinate Zn(2+). Residues 54–73 (AEQADDTAGPGAAEDDTDSH) form a disordered region.

It belongs to the DNA gyrase inhibitor YacG family. As to quaternary structure, interacts with GyrB. It depends on Zn(2+) as a cofactor.

Inhibits all the catalytic activities of DNA gyrase by preventing its interaction with DNA. Acts by binding directly to the C-terminal domain of GyrB, which probably disrupts DNA binding by the gyrase. This Hyphomonas neptunium (strain ATCC 15444) protein is DNA gyrase inhibitor YacG.